The primary structure comprises 1374 residues: DNA-directed RNA polymerase subunit beta (1374 aa).

It belongs to the RNA polymerase beta chain family. As to quaternary structure, the RNAP catalytic core consists of 2 alpha, 1 beta, 1 beta' and 1 omega subunit. When a sigma factor is associated with the core the holoenzyme is formed, which can initiate transcription.

It catalyses the reaction RNA(n) + a ribonucleoside 5'-triphosphate = RNA(n+1) + diphosphate. Functionally, DNA-dependent RNA polymerase catalyzes the transcription of DNA into RNA using the four ribonucleoside triphosphates as substrates. This Rhodopseudomonas palustris (strain BisB5) protein is DNA-directed RNA polymerase subunit beta.